The chain runs to 272 residues: Troponin T, fast skeletal muscle (272 aa).

Residues 1–50 show a composition bias toward acidic residues; sequence MSDEETEQVEEQYEEEEEAQEEEVQEEAPEPEEVQEDAVAEEEREEDEEE. Positions 1–75 are disordered; it reads MSDEETEQVE…EKVDFDDIQK (75 aa). Serine 2 carries the post-translational modification N-acetylserine. Residue serine 2 is modified to Phosphoserine. Over residues 63–75 the composition is skewed to basic and acidic residues; it reads PEGEKVDFDDIQK. Serine 91 bears the Phosphoserine mark. A compositionally biased stretch (basic and acidic residues) spans 114 to 156; that stretch reads RAERAEQQRIRAEKEREPQNRLAEEKARREEEDAKRRAEDDMK. The segment at 114–193 is disordered; sequence RAERAEQQRI…TAREMKKKIL (80 aa). Phosphoserine is present on residues serine 162, serine 169, and serine 170. The segment covering 184-193 has biased composition (basic and acidic residues); it reads TAREMKKKIL. A Phosphoserine modification is found at serine 206. At tyrosine 222 the chain carries Phosphotyrosine. The tract at residues 248–272 is disordered; the sequence is RIDQAQKHSKKAGATAKGKVGGRWK.

Belongs to the troponin T family. Expressed predominantly in skeletal muscle.

In terms of biological role, troponin T is the tropomyosin-binding subunit of troponin, the thin filament regulatory complex which confers calcium-sensitivity to striated muscle actomyosin ATPase activity. This Mus musculus (Mouse) protein is Troponin T, fast skeletal muscle (Tnnt3).